Reading from the N-terminus, the 235-residue chain is High mobility group protein 1.2 (235 aa).

The segment covering 1-34 (MNSGYSANIFPSSSSPTLYQSHQLQPNPSATMYQ) has biased composition (polar residues). A disordered region spans residues 1–47 (MNSGYSANIFPSSSSPTLYQSHQLQPNPSATMYQATPRDMGKPPVRG). DNA-binding regions (HMG box) lie at residues 47-117 (GKTS…AAYG) and 135-203 (PKRA…RNYK).

It belongs to the HMGB family.

The protein resides in the nucleus. The polypeptide is High mobility group protein 1.2 (hmg-1.2) (Caenorhabditis elegans).